We begin with the raw amino-acid sequence, 1509 residues long: Myosin-2 heavy chain, non muscle (1509 aa).

In terms of domain architecture, Myosin N-terminal SH3-like spans 32–85 (SDKTLAWWPTKDADRAFCHVEVTKDDGKNFTVRLENGEEKSQPKNEKNFLGVNP). A Myosin motor domain is found at 89–787 (DGVEDMGELG…QLAAIEELRE (699 aa)). Lysine 133 carries the N6,N6,N6-trimethyllysine modification. Residue 182–189 (GESGAGKT) coordinates ATP. Positions 623–643 (APAEEEKAAAGGSRNRSTGRG) are disordered. 2 actin-binding regions span residues 660–682 (LAHL…IPNL) and 766–780 (RFGV…GQLA). One can recognise an IQ domain in the interval 790–819 (ISKMVVSIQAGARAFLARRMYDKMREQTVS). The segment at 848-1226 (LISQRNFQKE…AERDSGAQQR (379 aa)) is alpha-helical tailpiece (S2). A coiled-coil region spans residues 848–1509 (LISQRNFQKE…VRAGSARAEE (662 aa)). Basic and acidic residues-rich tracts occupy residues 958–1019 (ELKA…KDAL), 1034–1047 (KNTE…RNEL), 1097–1107 (EDARSEVDSLK), 1115–1141 (KSLK…RANV), and 1179–1189 (QVDETKRRLEE). Disordered regions lie at residues 958–1049 (ELKA…ELDD), 1068–1141 (LAQT…RANV), 1170–1195 (AAQA…ASAA), 1213–1259 (ADLD…RLEG), 1352–1425 (VAKE…NREL), and 1474–1509 (QLQD…RAEE). The tract at residues 1227 to 1252 (RKLNTRISELQSELENAPKTGGASSE) is hinge. Residues 1231-1240 (TRISELQSEL) are compositionally biased toward polar residues. Residues 1253–1482 (EVKRLEGELE…AQLQDEIDGT (230 aa)) are alpha-helical tailpiece (LMM). The segment at 1253–1509 (EVKRLEGELE…VRAGSARAEE (257 aa)) is light meromyosin (LMM). A nonhelical tailpiece region spans residues 1483-1509 (PSSRGGSTRGASARGASVRAGSARAEE). Residues 1484–1509 (SSRGGSTRGASARGASVRAGSARAEE) show a composition bias toward low complexity. 3 positions are modified to phosphoserine: serine 1489, serine 1494, and serine 1499.

The protein belongs to the TRAFAC class myosin-kinesin ATPase superfamily. Myosin family. In terms of assembly, myosin II heavy chain is two-headed. It self-assembles into filaments. Hexamer of 2 heavy chain subunits (MHC), 2 alkali light chain subunits (MLC) and 2 regulatory light chain subunits (MLC-2).

Its function is as follows. Myosin is a protein that binds to F-actin and has ATPase activity that is activated by F-actin. The sequence is that of Myosin-2 heavy chain, non muscle from Acanthamoeba castellanii (Amoeba).